A 256-amino-acid polypeptide reads, in one-letter code: Adenylate kinase (256 aa).

49 to 54 serves as a coordination point for ATP; sequence GAGKGT. The interval 69–98 is NMP; sequence ATGDMLRDQVEKKTPLGIAAKKIMDAGGLV. Residues T70, R75, 96-98, 125-128, and Q132 each bind AMP; these read GLV and GFPR. An LID region spans residues 166–203; that stretch reads GRLIHPASGRSYHKIFNPPKKAGIDDLTGEPLIQRSDD. Residues R167 and 176-177 contribute to the ATP site; that span reads SY. 2 residues coordinate AMP: R200 and R211. Q239 lines the ATP pocket.

Belongs to the adenylate kinase family. AK2 subfamily. Monomer.

The protein localises to the cytoplasm. Its subcellular location is the cytosol. The protein resides in the mitochondrion intermembrane space. The enzyme catalyses AMP + ATP = 2 ADP. Catalyzes the reversible transfer of the terminal phosphate group between ATP and AMP. Plays an important role in cellular energy homeostasis and in adenine nucleotide metabolism. Adenylate kinase activity is critical for regulation of the phosphate utilization and the AMP de novo biosynthesis pathways. The protein is Adenylate kinase of Coprinopsis cinerea (strain Okayama-7 / 130 / ATCC MYA-4618 / FGSC 9003) (Inky cap fungus).